A 759-amino-acid chain; its full sequence is MNFEEIEERDGVRFTWNVFPSTRIESSRTIVPIASIYKPLNERPDLPPVLYEPVTCKAPCKAVLNPYCHIDTRAKFWICPFCLQRNMLPPQYKDISNTSLPIELLPEYSTIEYTLPRPPQLTPVFLFVVDVCQDEENLQALKDSLIISLSLLPPECLVGLVTFGTMVDVYELGYTECSKSYVFRGSKDYTSKQIQEMLGLPTSNVSPVALQQARSFQGSAAPSRFLLPIQQCEFQLTNILEQLQPDSWPVANDRRPQRCTGTALNISVSMMESVCPNSGGHIMLFAGGPSTVGPGTVVSTELREPIRSHHDIERDQAKHVKKALRFYEGLTKRVSANGHAVDILAGCLDQIGIMEMKSLASSTGGYLVLSDSFTTSIFKQSFQRIFGRDSLNNMLLGFNATMEVLTTKELKISGLIGHAVSLNKKSQNVGDIEIGLGNTNSWKMCGISPKSTYAIYFEVATQSASAPQGDSRGLVQYLTLYQHSSNTFRLRVTTVARAFADGGSPLIVNSFDQEAAAVAMARIAAFKAEVDDGPDVLRWTDRMLIKLCQKFAEYRKDDPSSFRLSSQFTLYPQFMYYLRRSPFLQVFNNSPDETAFYRHMLNHEDVNNSLIMIQPTLQSFSFEHPGGVPVLLDAVSVKPDVILLLDTFFHILIFHGDTIAQWRNAGYQNQPEYQNLKELLEAPRVEAAELLIDRFPIPRFIVCDQGGSQARFLLSRLNPSETHNTTSMYGAPPAHAILTDDVSLQTFMSHLKKLAVAVS.

Zn(2+)-binding residues include C56, C60, C79, and C82.

It belongs to the SEC23/SEC24 family. SEC23 subfamily. In terms of assembly, the COPII coat is composed of at least 5 proteins: the sec23/24 complex, the sec13/31 complex, and the protein sar1.

The protein resides in the cytoplasm. It localises to the cytoplasmic vesicle. The protein localises to the COPII-coated vesicle membrane. Its subcellular location is the endoplasmic reticulum membrane. It is found in the golgi apparatus membrane. In terms of biological role, component of the coat protein complex II (COPII) which promotes the formation of transport vesicles from the endoplasmic reticulum (ER). The coat has two main functions, the physical deformation of the endoplasmic reticulum membrane into vesicles and the selection of cargo molecules. This chain is Protein transport protein sec23-1 (sec231), found in Schizosaccharomyces pombe (strain 972 / ATCC 24843) (Fission yeast).